A 382-amino-acid polypeptide reads, in one-letter code: Prophage ps2 probable integrase (382 aa).

Residues 63-142 form the Core-binding (CB) domain; it reads AKFTDIAEEW…TLNLIFDYAV (80 aa). The region spanning 170–376 is the Tyr recombinase domain; it reads IQNKYLEQNE…TENMKSSIID (207 aa). Active-site residues include Arg209, Lys242, His326, Arg329, and His352. The active-site O-(3'-phospho-DNA)-tyrosine intermediate is Tyr363.

It belongs to the 'phage' integrase family.

The sequence is that of Prophage ps2 probable integrase (ps201) from Lactococcus lactis subsp. lactis (strain IL1403) (Streptococcus lactis).